The chain runs to 292 residues: Elongation factor Ts (292 aa).

Residues 81-84 (TDFV) form an involved in Mg(2+) ion dislocation from EF-Tu region.

This sequence belongs to the EF-Ts family.

It localises to the cytoplasm. Functionally, associates with the EF-Tu.GDP complex and induces the exchange of GDP to GTP. It remains bound to the aminoacyl-tRNA.EF-Tu.GTP complex up to the GTP hydrolysis stage on the ribosome. The chain is Elongation factor Ts from Psychromonas ingrahamii (strain DSM 17664 / CCUG 51855 / 37).